Here is a 1068-residue protein sequence, read N- to C-terminus: Huntingtin-interacting protein 1-related protein (1068 aa).

Met1 bears the N-acetylmethionine mark. The 129-residue stretch at 23 to 151 (EREQFDKTQA…SFHLKHPQFP (129 aa)) folds into the ENTH domain. Residues 347–599 (SVKDDRDLQI…RSSQEQGELQ (253 aa)) adopt a coiled-coil conformation. Disordered regions lie at residues 424 to 443 (LEGE…ASAT), 529 to 549 (ARAQ…SSRL), and 582 to 608 (AALS…RESQ). Composition is skewed to basic and acidic residues over residues 425-443 (EGER…ASAT) and 539-549 (EQSKSELSSRL). Residues 590 to 600 (RSSQEQGELQG) are compositionally biased toward low complexity. One can recognise an I/LWEQ domain in the interval 771 to 1012 (SLDVRQEELG…ELRKQHYVLA (242 aa)). Residues 867–924 (RWTEGLISASKAVGWGATQLVEAADKVVLHTGKYEELIVCSHEIAASTAQLVAASKVK) form an important for actin binding region. The disordered stretch occupies residues 1016-1060 (GSPGEEVAIRPSTAPRSVTTKKPPLAQKPSVAPRQDHQLDKKDGI). Ser1017 carries the phosphoserine modification. The span at 1049-1059 (RQDHQLDKKDG) shows a compositional bias: basic and acidic residues.

Belongs to the SLA2 family. Homodimer. Interacts with actin; homodimerization promotes actin binding. Interacts with CLTB. Interacts with HIP1. Interacts (via ENTH and I/LWEQ domains) with BCL2L10. Brain, heart, kidney, pancreas, and liver, but not in lung or placenta.

It localises to the cytoplasm. Its subcellular location is the perinuclear region. It is found in the endomembrane system. The protein resides in the cytoplasmic vesicle. The protein localises to the clathrin-coated vesicle membrane. Its function is as follows. Component of clathrin-coated pits and vesicles, that may link the endocytic machinery to the actin cytoskeleton. Binds 3-phosphoinositides (via ENTH domain). May act through the ENTH domain to promote cell survival by stabilizing receptor tyrosine kinases following ligand-induced endocytosis. The protein is Huntingtin-interacting protein 1-related protein (HIP1R) of Homo sapiens (Human).